A 329-amino-acid polypeptide reads, in one-letter code: Adenylate isopentenyltransferase (329 aa).

ATP-binding positions include 37–44, Lys63, Thr74, 129–131, 220–222, and Lys313; these read GATGTGKS, SNS, and KAI.

This sequence belongs to the IPP transferase family. Mg(2+) serves as cofactor. As to expression, expressed in roots, stems, leaves and cones.

It carries out the reaction dimethylallyl diphosphate + AMP = N(6)-(dimethylallyl)adenosine 5'-phosphate + diphosphate. It catalyses the reaction dimethylallyl diphosphate + ADP = N(6)-(dimethylallyl)adenosine 5'-diphosphate + diphosphate. The enzyme catalyses dimethylallyl diphosphate + ATP = N(6)-(dimethylallyl)adenosine 5'-triphosphate + diphosphate. Its function is as follows. Involved in cytokinin biosynthesis. Catalyzes the transfer of an isopentenyl group from dimethylallyl diphosphate (DMAPP) to ATP, ADP and AMP. GMP, IMP, CMP or UMP are not used as substrates. The chain is Adenylate isopentenyltransferase from Humulus lupulus (European hop).